The sequence spans 158 residues: Disease resistance response protein Pi49 (158 aa).

The protein belongs to the BetVI family.

The protein is Disease resistance response protein Pi49 (DRR49A) of Pisum sativum (Garden pea).